A 288-amino-acid chain; its full sequence is ATP synthase gamma chain (288 aa).

This sequence belongs to the ATPase gamma chain family. In terms of assembly, F-type ATPases have 2 components, CF(1) - the catalytic core - and CF(0) - the membrane proton channel. CF(1) has five subunits: alpha(3), beta(3), gamma(1), delta(1), epsilon(1). CF(0) has three main subunits: a, b and c.

The protein resides in the cell inner membrane. In terms of biological role, produces ATP from ADP in the presence of a proton gradient across the membrane. The gamma chain is believed to be important in regulating ATPase activity and the flow of protons through the CF(0) complex. The chain is ATP synthase gamma chain from Acidithiobacillus ferrooxidans (strain ATCC 23270 / DSM 14882 / CIP 104768 / NCIMB 8455) (Ferrobacillus ferrooxidans (strain ATCC 23270)).